We begin with the raw amino-acid sequence, 990 residues long: Leucine--tRNA ligase (990 aa).

The 'HIGH' region signature appears at 74 to 85 (PYPSGKGLHVGH). A disordered region spans residues 573 to 602 (LPINLPDVPDYSPKTFDPEDAESDPEAPLS). The 'KMSKS' region motif lies at 763-767 (KMGKS). K766 contributes to the ATP binding site.

Belongs to the class-I aminoacyl-tRNA synthetase family.

The protein localises to the cytoplasm. It carries out the reaction tRNA(Leu) + L-leucine + ATP = L-leucyl-tRNA(Leu) + AMP + diphosphate. The chain is Leucine--tRNA ligase from Bifidobacterium adolescentis (strain ATCC 15703 / DSM 20083 / NCTC 11814 / E194a).